The primary structure comprises 387 residues: NAD(P)H oxidoreductase RTN4IP1, mitochondrial (387 aa).

Residues 1-27 (MLMCRRWLVCSLRCHYRSFSFSAARRT) constitute a mitochondrion transit peptide. In terms of domain architecture, Enoyl reductase (ER) spans 38–379 (GKNDVLRFTK…QGHARGKTVV (342 aa)). NADPH contacts are provided by serine 200, glycine 202, valine 203, serine 223, tyrosine 241, leucine 286, glycine 327, phenylalanine 329, histidine 372, alanine 373, and arginine 374.

The protein belongs to the zinc-containing alcohol dehydrogenase family. Quinone oxidoreductase subfamily.

Its subcellular location is the mitochondrion matrix. The protein resides in the mitochondrion outer membrane. It carries out the reaction a 3-demethylubiquinone + NADH + 2 H(+) = a 3-demethylubiquinol + NAD(+). The enzyme catalyses a 3-demethylubiquinone + NADPH + 2 H(+) = a 3-demethylubiquinol + NADP(+). The catalysed reaction is 3-demethylubiquinone-10 + NADH + 2 H(+) = 3-demethylubiquinol-10 + NAD(+). It catalyses the reaction 3-demethylubiquinone-10 + NADPH + 2 H(+) = 3-demethylubiquinol-10 + NADP(+). It functions in the pathway cofactor biosynthesis; ubiquinone biosynthesis. In terms of biological role, NAD(P)H oxidoreductase involved in the ubiquinone biosynthetic pathway. Required for the O-methyltransferase activity of COQ3. Able to catalyze the oxidoreduction of 3-demethylubiquinone into 3-demethylubiquinol in vitro. However, it is unclear if 3-demethylubiquinone constitutes a substrate in vivo. May also play a role in the regulation of retinal ganglion cell (RGC) neurite outgrowth, and hence in the development of the inner retina and optic nerve. The chain is NAD(P)H oxidoreductase RTN4IP1, mitochondrial (rtn4ip1) from Danio rerio (Zebrafish).